The chain runs to 192 residues: Flavin prenyltransferase UbiX (192 aa).

Residues 10-12 (GAS), serine 36, 92-95 (SMTT), and arginine 127 each bind FMN. Dimethylallyl phosphate-binding residues include tyrosine 157 and lysine 173.

It belongs to the UbiX/PAD1 family.

It catalyses the reaction dimethylallyl phosphate + FMNH2 = prenylated FMNH2 + phosphate. In terms of biological role, flavin prenyltransferase that catalyzes the synthesis of the prenylated FMN cofactor (prenyl-FMN) for 4-hydroxy-3-polyprenylbenzoic acid decarboxylase UbiD. The prenyltransferase is metal-independent and links a dimethylallyl moiety from dimethylallyl monophosphate (DMAP) to the flavin N5 and C6 atoms of FMN. The polypeptide is Flavin prenyltransferase UbiX (Chlamydia pneumoniae (Chlamydophila pneumoniae)).